The chain runs to 422 residues: Tyrosine--tRNA ligase (422 aa).

Y36 provides a ligand contact to L-tyrosine. The short motif at 41–50 (PTADSLHIGH) is the 'HIGH' region element. Residues Y175 and Q179 each coordinate L-tyrosine. The 'KMSKS' region motif lies at 235–239 (KFGKT). K238 contributes to the ATP binding site. Residues 354-411 (TSLQEALTKSKLATSRSQARYFIKSNAITINAHKQSKIEYIFQDSDRIYNLYTLLKRG) enclose the S4 RNA-binding domain.

Belongs to the class-I aminoacyl-tRNA synthetase family. TyrS type 1 subfamily. As to quaternary structure, homodimer.

The protein resides in the cytoplasm. It carries out the reaction tRNA(Tyr) + L-tyrosine + ATP = L-tyrosyl-tRNA(Tyr) + AMP + diphosphate + H(+). Catalyzes the attachment of tyrosine to tRNA(Tyr) in a two-step reaction: tyrosine is first activated by ATP to form Tyr-AMP and then transferred to the acceptor end of tRNA(Tyr). In Blochmanniella floridana, this protein is Tyrosine--tRNA ligase.